We begin with the raw amino-acid sequence, 176 residues long: Isopentenyl-diphosphate Delta-isomerase (176 aa).

The Mn(2+) site is built by histidine 22 and histidine 28. The region spanning 26–160 (LRHKAVSVFV…PDRYTPWLRI (135 aa)) is the Nudix hydrolase domain. The active site involves cysteine 62. Mn(2+) is bound at residue histidine 64. Glutamate 82 serves as a coordination point for Mg(2+). 2 residues coordinate Mn(2+): glutamate 108 and glutamate 110. Residue glutamate 110 is part of the active site.

The protein belongs to the IPP isomerase type 1 family. It depends on Mg(2+) as a cofactor. Mn(2+) is required as a cofactor.

It localises to the cytoplasm. It catalyses the reaction isopentenyl diphosphate = dimethylallyl diphosphate. The protein operates within isoprenoid biosynthesis; dimethylallyl diphosphate biosynthesis; dimethylallyl diphosphate from isopentenyl diphosphate: step 1/1. It functions in the pathway porphyrin-containing compound metabolism; chlorophyll biosynthesis. Catalyzes the 1,3-allylic rearrangement of the homoallylic substrate isopentenyl (IPP) to its highly electrophilic allylic isomer, dimethylallyl diphosphate (DMAPP). This Roseobacter denitrificans (strain ATCC 33942 / OCh 114) (Erythrobacter sp. (strain OCh 114)) protein is Isopentenyl-diphosphate Delta-isomerase.